Reading from the N-terminus, the 506-residue chain is Kynurenine 3-monooxygenase (506 aa).

A disordered region spans residues 153–175 (QETSLLPGEESEKDKKQNTEDED). The segment covering 162-171 (ESEKDKKQNT) has biased composition (basic and acidic residues).

The protein belongs to the aromatic-ring hydroxylase family. KMO subfamily. FAD serves as cofactor.

Its subcellular location is the mitochondrion outer membrane. The catalysed reaction is L-kynurenine + NADPH + O2 + H(+) = 3-hydroxy-L-kynurenine + NADP(+) + H2O. It participates in cofactor biosynthesis; NAD(+) biosynthesis; quinolinate from L-kynurenine: step 1/3. Its function is as follows. Catalyzes the hydroxylation of L-kynurenine (L-Kyn) to form 3-hydroxy-L-kynurenine (L-3OHKyn). Required for synthesis of quinolinic acid. The polypeptide is Kynurenine 3-monooxygenase (Cryptococcus neoformans var. neoformans serotype D (strain B-3501A) (Filobasidiella neoformans)).